The primary structure comprises 247 residues: Uridylate kinase (247 aa).

Residue 16–19 (KLSG) participates in ATP binding. Glycine 58 serves as a coordination point for UMP. ATP contacts are provided by glycine 59 and arginine 63. Residues aspartate 78 and 139–146 (TGNPFFTT) contribute to the UMP site. ATP contacts are provided by threonine 166, tyrosine 172, and aspartate 175.

It belongs to the UMP kinase family. As to quaternary structure, homohexamer.

The protein localises to the cytoplasm. The enzyme catalyses UMP + ATP = UDP + ADP. Its pathway is pyrimidine metabolism; CTP biosynthesis via de novo pathway; UDP from UMP (UMPK route): step 1/1. With respect to regulation, inhibited by UTP. In terms of biological role, catalyzes the reversible phosphorylation of UMP to UDP. The chain is Uridylate kinase from Xylella fastidiosa (strain Temecula1 / ATCC 700964).